The following is a 412-amino-acid chain: Pentatricopeptide repeat-containing protein At3g60980, mitochondrial (412 aa).

The N-terminal 18 residues, 1–18, are a transit peptide targeting the mitochondrion; it reads MSLIGRLNLGRRFCTAVP. PPR repeat units lie at residues 69 to 104, 105 to 139, 143 to 178, 179 to 213, 230 to 264, 266 to 296, 305 to 339, 344 to 371, and 373 to 407; these read TTTI…NLRP, NSHC…GQVH, SDDS…TTYP, DHVA…FLIA, VAFL…NRLL, CAET…LLDK, DSDT…NDYL, IITR…DFGY, and DVNT…TLKE.

The protein belongs to the PPR family. P subfamily.

The protein resides in the mitochondrion. This Arabidopsis thaliana (Mouse-ear cress) protein is Pentatricopeptide repeat-containing protein At3g60980, mitochondrial.